The chain runs to 407 residues: Heparan-sulfate 6-O-sulfotransferase 1-B (407 aa).

Residues 8–14 (MVERTSK) are Cytoplasmic-facing. A helical; Signal-anchor for type II membrane protein transmembrane segment spans residues 15-35 (FLLIVVGSVFFMLILYQYVAP). At 36–407 (GVINFGSPHG…DYMNHIINGW (372 aa)) the chain is on the lumenal side. Residue 92-100 (HIQKTGGTT) coordinates 3'-phosphoadenylyl sulfate. Substrate-binding positions include 122–123 (KK), Arg-139, Trp-144, and His-149. His-149 (proton acceptor) is an active-site residue. 3'-phosphoadenylyl sulfate contacts are provided by Arg-183 and Ser-191. Positions 195 and 202 each coordinate substrate. An N-linked (GlcNAc...) asparagine glycan is attached at Asn-262. 315–317 (MQY) provides a ligand contact to 3'-phosphoadenylyl sulfate. N-linked (GlcNAc...) asparagine glycosylation is present at Asn-318. A 3'-phosphoadenylyl sulfate-binding site is contributed by 321–322 (RA). Residue Asn-329 is glycosylated (N-linked (GlcNAc...) asparagine).

Belongs to the sulfotransferase 6 family. In terms of tissue distribution, during early somitogenesis, first expressed in floor plate and somites. During mid-somitogenesis, expressed strongly in somites and more weakly in eye and hindbrain. During late somitogenesis, expressed in eye, hindbrain and posterior somites. At 24 hours post-fertilization (hpf), expressed in lens, forebrain, hindbrain, otic vesicle, anterior spinal cord neurons and posterior somites. At 36 hpf, expressed in the retinal ciliary marginal zone, brain, pancreas and weakly in pectoral fin. At 48 hpf, expressed in the retinal ciliary marginal zone, retinal ganglion cells, rhombomeres, otic vesicle and weakly in pectoral fin.

The protein localises to the membrane. The catalysed reaction is alpha-D-glucosaminyl-[heparan sulfate](n) + 3'-phosphoadenylyl sulfate = 6-sulfo-alpha-D-glucosaminyl-[heparan sulfate](n) + adenosine 3',5'-bisphosphate + H(+). 6-O-sulfation enzyme which catalyzes the transfer of sulfate from 3'-phosphoadenosine 5'-phosphosulfate (PAPS) to position 6 of the N-sulfoglucosamine residue (GlcNS) of heparan sulfate. This chain is Heparan-sulfate 6-O-sulfotransferase 1-B, found in Danio rerio (Zebrafish).